The primary structure comprises 777 residues: DNA repair helicase/translocase XPB-R (777 aa).

One can recognise a Helicase ATP-binding domain in the interval 212–416; sequence AASDGALRSG…DLFHLVGPKL (205 aa). Position 225–232 (225–232) interacts with ATP; sequence LPCGSGKT. Residues 369–372 carry the DEVH box motif; the sequence is DEVH. Residues 484-631 enclose the Helicase C-terminal domain; that stretch reads IVKRHVAESS…GYTCSVTEFN (148 aa).

It belongs to the helicase family. RAD25/XPB subfamily.

The enzyme catalyses Couples ATP hydrolysis with the unwinding of duplex DNA by translocating in the 3'-5' direction.. It catalyses the reaction ATP + H2O = ADP + phosphate + H(+). Functionally, ATP-dependent 3'-5' DNA helicase/translocase; binds dsDNA rather than ssDNA, unzipping it in a translocase rather than classical helicase activity. Involved in nucleotide excision repair (NER) of damaged DNA. XPB-R is a paralog of XBP, but is not a component of the TFIIH basal transcription factor and is dispensable for RNA polymerase II transcription. This chain is DNA repair helicase/translocase XPB-R, found in Trypanosoma brucei brucei (strain 927/4 GUTat10.1).